We begin with the raw amino-acid sequence, 368 residues long: C6 finger domain transcription factor tcpZ (368 aa).

A DNA-binding region (zn(2)-C6 fungal-type) is located at residues 30-56 (CDACHASKVRCSGEPICARCQRDNVAC). Residues 84–109 (FIEQRQRPAASQPPGHGTSRDSSVCA) are disordered.

Its subcellular location is the nucleus. Functionally, transcription factor that specifically regulates the thioclapurine biosynthesis gene cluster. In Claviceps purpurea (strain 20.1) (Ergot fungus), this protein is C6 finger domain transcription factor tcpZ.